Reading from the N-terminus, the 187-residue chain is UPF0340 protein SP70585_0722 (187 aa).

The protein belongs to the UPF0340 family.

The sequence is that of UPF0340 protein SP70585_0722 from Streptococcus pneumoniae (strain 70585).